We begin with the raw amino-acid sequence, 226 residues long: Lipid phosphate phosphatase gamma (226 aa).

At Met1 the chain carries N-acetylmethionine. 5 consecutive transmembrane segments (helical) span residues 24-44 (LGHFLAWISLVPVFISLGGFV), 52-72 (ELQGIFFGIGLVISQFINEFI), 102-122 (FMFFFATYFSLMGCKGIGFWF), 128-148 (WIMNLLHWSLAVVTMYSRVYL), and 152-174 (TVAQVFAGAALGGIVGASWFWVV).

Belongs to the PA-phosphatase related phosphoesterase family. Expressed in root tips, root branch points, vascular tissue of cotyledons and leaves, pistil, anthers and filaments.

It is found in the plastid. Its subcellular location is the chloroplast inner membrane. Its activity is regulated as follows. Inhibited by Mg(2+). In terms of biological role, exhibits phosphatidate phosphatase (PAP) activity in vitro. May play a primary role as PAP in plastids. In Arabidopsis thaliana (Mouse-ear cress), this protein is Lipid phosphate phosphatase gamma (LPPG).